The following is a 232-amino-acid chain: Large ribosomal subunit protein uL1 (232 aa).

This sequence belongs to the universal ribosomal protein uL1 family. In terms of assembly, part of the 50S ribosomal subunit.

Its function is as follows. Binds directly to 23S rRNA. The L1 stalk is quite mobile in the ribosome, and is involved in E site tRNA release. In terms of biological role, protein L1 is also a translational repressor protein, it controls the translation of the L11 operon by binding to its mRNA. The sequence is that of Large ribosomal subunit protein uL1 from Xanthomonas axonopodis pv. citri (strain 306).